The primary structure comprises 311 residues: Probable cell division protein WhiA (311 aa).

The H-T-H motif DNA-binding region spans 277 to 311; it reads TLKEVADQIPDGPISKSGVNHRFKKLHELAETLKE.

The protein belongs to the WhiA family.

Involved in cell division and chromosome segregation. This chain is Probable cell division protein WhiA, found in Lactobacillus helveticus (strain DPC 4571).